Reading from the N-terminus, the 546-residue chain is Hydroxylamine reductase (546 aa).

Residues Cys-3, Cys-6, Cys-18, and Cys-25 each coordinate [4Fe-4S] cluster. Hybrid [4Fe-2O-2S] cluster contacts are provided by His-245, Glu-269, Cys-313, Cys-401, Cys-429, Cys-454, Glu-488, and Lys-490. A Cysteine persulfide modification is found at Cys-401.

This sequence belongs to the HCP family. Requires [4Fe-4S] cluster as cofactor. It depends on hybrid [4Fe-2O-2S] cluster as a cofactor.

The protein localises to the cytoplasm. The catalysed reaction is A + NH4(+) + H2O = hydroxylamine + AH2 + H(+). Inhibited by cyanide and by sulfide and iron reagents such as dithioerythritol, 2,2'-dipyridyl and o-phenanthroline. Could be involved in assimilation and/or detoxification of hydroxylamine, which is a toxic compound that may be formed during nitrate/nitrite assimilation. Catalyzes the reduction of hydroxylamine to form NH(3) and H(2)O. It has a low reductase activity with FAD, FMN, benzyl viologen and bromphenol blue as electrons donors, but it is not able to use NAD or NADP. In Rhodobacter capsulatus (Rhodopseudomonas capsulata), this protein is Hydroxylamine reductase.